Here is a 379-residue protein sequence, read N- to C-terminus: Chaperone protein DnaJ (379 aa).

The region spanning 5–69 is the J domain; sequence EYYERLGVDK…QKRAAYDQYG (65 aa). Residues 141–223 form a CR-type zinc finger; that stretch reads GVEKQVKYNR…CHGSGHEKVA (83 aa). The Zn(2+) site is built by C154, C157, C171, C174, C197, C200, C211, and C214. CXXCXGXG motif repeat units follow at residues 154–161, 171–178, 197–204, and 211–218; these read CHTCGGSG, CHKCGGRG, CDVCHGTG, and CTTCHGSG.

It belongs to the DnaJ family. Homodimer. Requires Zn(2+) as cofactor.

Its subcellular location is the cytoplasm. In terms of biological role, participates actively in the response to hyperosmotic and heat shock by preventing the aggregation of stress-denatured proteins and by disaggregating proteins, also in an autonomous, DnaK-independent fashion. Unfolded proteins bind initially to DnaJ; upon interaction with the DnaJ-bound protein, DnaK hydrolyzes its bound ATP, resulting in the formation of a stable complex. GrpE releases ADP from DnaK; ATP binding to DnaK triggers the release of the substrate protein, thus completing the reaction cycle. Several rounds of ATP-dependent interactions between DnaJ, DnaK and GrpE are required for fully efficient folding. Also involved, together with DnaK and GrpE, in the DNA replication of plasmids through activation of initiation proteins. The chain is Chaperone protein DnaJ from Lactococcus lactis subsp. cremoris (strain MG1363).